We begin with the raw amino-acid sequence, 229 residues long: Triosephosphate isomerase (229 aa).

9–11 (NLK) is a binding site for substrate. His-93 acts as the Electrophile in catalysis. Residue Glu-141 is the Proton acceptor of the active site. Substrate contacts are provided by residues Ile-146, Gly-181, and 202 to 203 (AS).

This sequence belongs to the triosephosphate isomerase family. Homotetramer; dimer of dimers.

It is found in the cytoplasm. It carries out the reaction D-glyceraldehyde 3-phosphate = dihydroxyacetone phosphate. It participates in carbohydrate biosynthesis; gluconeogenesis. It functions in the pathway carbohydrate degradation; glycolysis; D-glyceraldehyde 3-phosphate from glycerone phosphate: step 1/1. Its function is as follows. Involved in the gluconeogenesis. Catalyzes stereospecifically the conversion of dihydroxyacetone phosphate (DHAP) to D-glyceraldehyde-3-phosphate (G3P). The sequence is that of Triosephosphate isomerase from Pyrobaculum islandicum (strain DSM 4184 / JCM 9189 / GEO3).